The sequence spans 257 residues: 1-(5-phosphoribosyl)-5-[(5-phosphoribosylamino)methylideneamino] imidazole-4-carboxamide isomerase (257 aa).

The Proton acceptor role is filled by aspartate 8. Residue aspartate 129 is the Proton donor of the active site.

It belongs to the HisA/HisF family.

The protein localises to the cytoplasm. It catalyses the reaction 1-(5-phospho-beta-D-ribosyl)-5-[(5-phospho-beta-D-ribosylamino)methylideneamino]imidazole-4-carboxamide = 5-[(5-phospho-1-deoxy-D-ribulos-1-ylimino)methylamino]-1-(5-phospho-beta-D-ribosyl)imidazole-4-carboxamide. Its pathway is amino-acid biosynthesis; L-histidine biosynthesis; L-histidine from 5-phospho-alpha-D-ribose 1-diphosphate: step 4/9. This Crocosphaera subtropica (strain ATCC 51142 / BH68) (Cyanothece sp. (strain ATCC 51142)) protein is 1-(5-phosphoribosyl)-5-[(5-phosphoribosylamino)methylideneamino] imidazole-4-carboxamide isomerase.